Here is a 646-residue protein sequence, read N- to C-terminus: Kinesin-like protein klp-20 (646 aa).

Residues Lys6–Ile331 form the Kinesin motor domain. Gly91–Thr98 provides a ligand contact to ATP. Residues Lys342–Ala552 adopt a coiled-coil conformation. Residues Leu525–Asn550 are interaction with klp-11. The disordered stretch occupies residues Thr623 to Thr646. The span at Arg629–Ser638 shows a compositional bias: basic residues.

Belongs to the TRAFAC class myosin-kinesin ATPase superfamily. Kinesin family. Kinesin II subfamily. As to quaternary structure, component of the kinesin II motor complex, a heterotrimeric complex composed of kap-1, klp-11 and klp-20. Interacts (via C-terminus) with klp-11 (via C-terminus) to form a heterodimer. Furthermore, within the heterodimer, the C-termini of klp-20 and klp-11 interact to form a coiled coil (stalk) or tail domain, and this is necessary for association with kap-1, and kinesin II motor complex activity upon IFT cargo binding. Prior to cargo binding, the klp-11/klp-20 heterodimer is autoinhibited by the tail domain of the heterodimer, which folds onto the kinesin motor domain. Cargo binding to the heterodimer relieves the autoinhibition, and allows for an extended conformation of the tail domain, and function of the heterodimer.

The protein localises to the cell projection. It localises to the cilium. Its subcellular location is the cytoplasm. It is found in the cytoskeleton. Functionally, component of the kinesin II motor complex (composed of kap-1 and the heterodimeric motor proteins klp-11 and klp-20) which is required for intraflagellar transport (IFT). Heterodimerizes with klp-11 to form a 'processive' molecular motor upon IFT cargo binding, which, within the kinesin II motor complex, binds to and moves along microtubules in a unidirectional manner (without dissociation of the heterodimer), and in turn, is responsible for the IFT of cargo. Specifically, the kinesin II motor complex, together with the kinesin motor protein osm-3 moves along microtubules and is required for anterograde IFT along the middle segment of the sensory neuron cilia. In particular, the kinesin II motor complex delivers specific ciliary cargo proteins such as che-3 which are related to motility to ciliary tips. This is likely mediated by IFT complexes A and B. In Caenorhabditis elegans, this protein is Kinesin-like protein klp-20.